The following is a 271-amino-acid chain: Formamidopyrimidine-DNA glycosylase (271 aa).

The Schiff-base intermediate with DNA role is filled by P2. Catalysis depends on E3, which acts as the Proton donor. K58 functions as the Proton donor; for beta-elimination activity in the catalytic mechanism. Positions 91, 110, and 152 each coordinate DNA. Residues 237–271 form an FPG-type zinc finger; that stretch reads WVYGRTGQPCRKCGALVSKTRQGQRSSFFCAQCQK. R261 acts as the Proton donor; for delta-elimination activity in catalysis.

Belongs to the FPG family. As to quaternary structure, monomer. Zn(2+) is required as a cofactor.

The enzyme catalyses Hydrolysis of DNA containing ring-opened 7-methylguanine residues, releasing 2,6-diamino-4-hydroxy-5-(N-methyl)formamidopyrimidine.. The catalysed reaction is 2'-deoxyribonucleotide-(2'-deoxyribose 5'-phosphate)-2'-deoxyribonucleotide-DNA = a 3'-end 2'-deoxyribonucleotide-(2,3-dehydro-2,3-deoxyribose 5'-phosphate)-DNA + a 5'-end 5'-phospho-2'-deoxyribonucleoside-DNA + H(+). Involved in base excision repair of DNA damaged by oxidation or by mutagenic agents. Acts as a DNA glycosylase that recognizes and removes damaged bases. Has a preference for oxidized purines, such as 7,8-dihydro-8-oxoguanine (8-oxoG). Has AP (apurinic/apyrimidinic) lyase activity and introduces nicks in the DNA strand. Cleaves the DNA backbone by beta-delta elimination to generate a single-strand break at the site of the removed base with both 3'- and 5'-phosphates. The polypeptide is Formamidopyrimidine-DNA glycosylase (Nitrosomonas eutropha (strain DSM 101675 / C91 / Nm57)).